The sequence spans 878 residues: Alanine--tRNA ligase (878 aa).

Zn(2+) contacts are provided by H562, H566, C670, and H674.

The protein belongs to the class-II aminoacyl-tRNA synthetase family. The cofactor is Zn(2+).

The protein resides in the cytoplasm. It catalyses the reaction tRNA(Ala) + L-alanine + ATP = L-alanyl-tRNA(Ala) + AMP + diphosphate. In terms of biological role, catalyzes the attachment of alanine to tRNA(Ala) in a two-step reaction: alanine is first activated by ATP to form Ala-AMP and then transferred to the acceptor end of tRNA(Ala). Also edits incorrectly charged Ser-tRNA(Ala) and Gly-tRNA(Ala) via its editing domain. In Acinetobacter baylyi (strain ATCC 33305 / BD413 / ADP1), this protein is Alanine--tRNA ligase.